The primary structure comprises 514 residues: 2,3-bisphosphoglycerate-independent phosphoglycerate mutase (514 aa).

Mn(2+) is bound by residues Asp-14 and Ser-64. The active-site Phosphoserine intermediate is the Ser-64. Residues His-125, 155–156, Arg-187, Arg-193, 263–266, and Lys-336 contribute to the substrate site; these read RD and RADR. Mn(2+) contacts are provided by Asp-403, His-407, Asp-444, His-445, and His-463.

The protein belongs to the BPG-independent phosphoglycerate mutase family. As to quaternary structure, monomer. Requires Mn(2+) as cofactor.

It carries out the reaction (2R)-2-phosphoglycerate = (2R)-3-phosphoglycerate. It participates in carbohydrate degradation; glycolysis; pyruvate from D-glyceraldehyde 3-phosphate: step 3/5. Catalyzes the interconversion of 2-phosphoglycerate and 3-phosphoglycerate. The polypeptide is 2,3-bisphosphoglycerate-independent phosphoglycerate mutase (Shewanella baltica (strain OS195)).